A 133-amino-acid polypeptide reads, in one-letter code: Agglutinin alpha chain (133 aa).

The Jacalin-type lectin domain maps to 1–133; it reads GKAFDDGAFT…LDYFSMYLSL (133 aa). A repeat spans 7–64; that stretch reads GAFTGIREINLSYNKETAIGDFQVVYDLNGSPYVGQNHKSFITGFTPVKISLDFPSEY. N-linked (GlcNAc...) asparagine; when associated with variant T-45; partial glycosylation occurs at Asn-43. The interval 68-89 is igA-binding; that stretch reads VSGYTGNVSGYVVVRSLTFKTN. A glycan (N-linked (GlcNAc...) asparagine; partial) is linked at Asn-74. Residues 76–130 constitute a repeat; sequence SGYVVVRSLTFKTNKKTYGPYGVTSGTPFNLPIENGLIVGFKGSIGYWLDYFSMY.

Belongs to the jacalin lectin family. In terms of assembly, tetramer of four alpha chains associated with two or four beta chains.

D-galactose-specific lectin, binds the T-antigen structure Gal-beta1,3-GalNAc (Thomsen-Friedenreich-antigen-specific lectin). Potent and selective stimulant of distinct T- and B-cell functions. Shows a unique ability to specifically recognize IgA-1 from human serum. This Artocarpus integer (Jack fruit) protein is Agglutinin alpha chain.